The primary structure comprises 668 residues: UvrABC system protein B (668 aa).

The region spanning Q31–R416 is the Helicase ATP-binding domain. ATP is bound at residue G44–T51. The short motif at Y97–I120 is the Beta-hairpin element. Residues Q433–I596 enclose the Helicase C-terminal domain. Positions E621–Q656 constitute a UVR domain.

This sequence belongs to the UvrB family. As to quaternary structure, forms a heterotetramer with UvrA during the search for lesions. Interacts with UvrC in an incision complex.

It is found in the cytoplasm. Functionally, the UvrABC repair system catalyzes the recognition and processing of DNA lesions. A damage recognition complex composed of 2 UvrA and 2 UvrB subunits scans DNA for abnormalities. Upon binding of the UvrA(2)B(2) complex to a putative damaged site, the DNA wraps around one UvrB monomer. DNA wrap is dependent on ATP binding by UvrB and probably causes local melting of the DNA helix, facilitating insertion of UvrB beta-hairpin between the DNA strands. Then UvrB probes one DNA strand for the presence of a lesion. If a lesion is found the UvrA subunits dissociate and the UvrB-DNA preincision complex is formed. This complex is subsequently bound by UvrC and the second UvrB is released. If no lesion is found, the DNA wraps around the other UvrB subunit that will check the other stand for damage. The sequence is that of UvrABC system protein B from Chlamydia trachomatis serovar D (strain ATCC VR-885 / DSM 19411 / UW-3/Cx).